The chain runs to 995 residues: UPF0182 protein MMAR_1371 (995 aa).

7 helical membrane passes run 18 to 38 (VLIL…RLID), 63 to 83 (FLVF…GLAL), 113 to 133 (LFGI…AQSY), 175 to 195 (FVAI…FGGI), 210 to 230 (IQLV…YWLD), 259 to 279 (KLIL…AIVL), and 287 to 307 (IGLV…PMIV). Residues 900–948 (AATGIQPTEGGAPANVPPNNAPSPEALPGTPPSPPTAVPPAPEASVTLS) are disordered. Residues 928-941 (GTPPSPPTAVPPAP) are compositionally biased toward pro residues.

It belongs to the UPF0182 family.

The protein resides in the cell membrane. This Mycobacterium marinum (strain ATCC BAA-535 / M) protein is UPF0182 protein MMAR_1371.